A 910-amino-acid polypeptide reads, in one-letter code: Inactive disease susceptibility protein LOV1 (910 aa).

Residues 22–60 are a coiled coil; sequence ARLNGIGEQVDGLKRQLGRLQSLLKDADAKKHESERVRN. The NB-ARC domain maps to 169 to 461; sequence EQSVEALAGH…AAEGIITSSD (293 aa). 3 LRR repeats span residues 584 to 609, 610 to 632, and 634 to 655; these read LPLL…IGDL, IHLR…LRNL, and LLLY…LKEM.

The protein belongs to the disease resistance NB-LRR family. RPP8/HRT subfamily.

The sequence is that of Inactive disease susceptibility protein LOV1 (LOV1) from Arabidopsis thaliana (Mouse-ear cress).